The following is a 276-amino-acid chain: NH(3)-dependent NAD(+) synthetase (276 aa).

Position 43–50 (43–50 (GISGGVDS)) interacts with ATP. Residue D49 coordinates Mg(2+). R146 serves as a coordination point for deamido-NAD(+). T166 contacts ATP. E171 contacts Mg(2+). Deamido-NAD(+) is bound by residues K179 and D186. K195 and T217 together coordinate ATP. 266 to 267 (HK) lines the deamido-NAD(+) pocket.

The protein belongs to the NAD synthetase family. As to quaternary structure, homodimer.

It carries out the reaction deamido-NAD(+) + NH4(+) + ATP = AMP + diphosphate + NAD(+) + H(+). It functions in the pathway cofactor biosynthesis; NAD(+) biosynthesis; NAD(+) from deamido-NAD(+) (ammonia route): step 1/1. Catalyzes the ATP-dependent amidation of deamido-NAD to form NAD. Uses ammonia as a nitrogen source. This Shewanella piezotolerans (strain WP3 / JCM 13877) protein is NH(3)-dependent NAD(+) synthetase.